The sequence spans 213 residues: Large ribosomal subunit protein uL1 (213 aa).

Belongs to the universal ribosomal protein uL1 family. As to quaternary structure, part of the 50S ribosomal subunit.

In terms of biological role, binds directly to 23S rRNA. Probably involved in E site tRNA release. Functionally, protein L1 is also a translational repressor protein, it controls the translation of its operon by binding to its mRNA. The protein is Large ribosomal subunit protein uL1 of Methanosarcina mazei (strain ATCC BAA-159 / DSM 3647 / Goe1 / Go1 / JCM 11833 / OCM 88) (Methanosarcina frisia).